The chain runs to 410 residues: Porin-like protein GalP (410 aa).

A signal peptide spans 1–25 (MKCRTLYPLVPTFALAASLPLQALA).

It belongs to the outer membrane porin (Opr) (TC 1.B.25) family.

Its function is as follows. Probable transporter, possibly involved in the gallate degradation pathway. May play a role in the uptake of low gallate concentrations that may exist in the natural habitats of P.putida. The chain is Porin-like protein GalP (galP) from Pseudomonas putida (strain ATCC 47054 / DSM 6125 / CFBP 8728 / NCIMB 11950 / KT2440).